The following is a 549-amino-acid chain: Probable protein kinase UbiB (549 aa).

Positions 123-504 (DFDETALASA…QRNNTGFSRL (382 aa)) constitute a Protein kinase domain. ATP contacts are provided by residues 129–137 (LASASIAQV) and Lys156. Catalysis depends on Asp291, which acts as the Proton acceptor. The chain crosses the membrane as a helical span at residues 505–525 (MILGIAIAGTFWKFEMLPLWV).

The protein belongs to the ABC1 family. UbiB subfamily.

It localises to the cell inner membrane. It participates in cofactor biosynthesis; ubiquinone biosynthesis [regulation]. Its function is as follows. Is probably a protein kinase regulator of UbiI activity which is involved in aerobic coenzyme Q (ubiquinone) biosynthesis. In Glaesserella parasuis serovar 5 (strain SH0165) (Haemophilus parasuis), this protein is Probable protein kinase UbiB.